The sequence spans 66 residues: Large ribosomal subunit protein bL35 (66 aa).

It belongs to the bacterial ribosomal protein bL35 family.

This Thermomicrobium roseum (strain ATCC 27502 / DSM 5159 / P-2) protein is Large ribosomal subunit protein bL35.